Reading from the N-terminus, the 198-residue chain is 3-isopropylmalate dehydratase small subunit (198 aa).

The protein belongs to the LeuD family. LeuD type 1 subfamily. In terms of assembly, heterodimer of LeuC and LeuD.

It carries out the reaction (2R,3S)-3-isopropylmalate = (2S)-2-isopropylmalate. It functions in the pathway amino-acid biosynthesis; L-leucine biosynthesis; L-leucine from 3-methyl-2-oxobutanoate: step 2/4. Functionally, catalyzes the isomerization between 2-isopropylmalate and 3-isopropylmalate, via the formation of 2-isopropylmaleate. This is 3-isopropylmalate dehydratase small subunit from Mycobacterium marinum (strain ATCC BAA-535 / M).